A 690-amino-acid polypeptide reads, in one-letter code: Glycine--tRNA ligase beta subunit (690 aa).

Belongs to the class-II aminoacyl-tRNA synthetase family. As to quaternary structure, tetramer of two alpha and two beta subunits.

Its subcellular location is the cytoplasm. The enzyme catalyses tRNA(Gly) + glycine + ATP = glycyl-tRNA(Gly) + AMP + diphosphate. The sequence is that of Glycine--tRNA ligase beta subunit from Desulfitobacterium hafniense (strain DSM 10664 / DCB-2).